Reading from the N-terminus, the 205-residue chain is Holliday junction branch migration complex subunit RuvA (205 aa).

The tract at residues 1–67 (MIGWLKGDVQ…ADNLQLFGFL (67 aa)) is domain I. Positions 68–146 (QLAERDLFRE…DSVASTGPER (79 aa)) are domain II. The tract at residues 147–155 (NQLDPVAPD) is flexible linker. The tract at residues 155–205 (DLIATLETLGFETHEIRDALQRLNGMGGPQDGDDDDAWLRACIKLMSSTDP) is domain III.

Belongs to the RuvA family. In terms of assembly, homotetramer. Forms an RuvA(8)-RuvB(12)-Holliday junction (HJ) complex. HJ DNA is sandwiched between 2 RuvA tetramers; dsDNA enters through RuvA and exits via RuvB. An RuvB hexamer assembles on each DNA strand where it exits the tetramer. Each RuvB hexamer is contacted by two RuvA subunits (via domain III) on 2 adjacent RuvB subunits; this complex drives branch migration. In the full resolvosome a probable DNA-RuvA(4)-RuvB(12)-RuvC(2) complex forms which resolves the HJ.

Its subcellular location is the cytoplasm. The RuvA-RuvB-RuvC complex processes Holliday junction (HJ) DNA during genetic recombination and DNA repair, while the RuvA-RuvB complex plays an important role in the rescue of blocked DNA replication forks via replication fork reversal (RFR). RuvA specifically binds to HJ cruciform DNA, conferring on it an open structure. The RuvB hexamer acts as an ATP-dependent pump, pulling dsDNA into and through the RuvAB complex. HJ branch migration allows RuvC to scan DNA until it finds its consensus sequence, where it cleaves and resolves the cruciform DNA. The sequence is that of Holliday junction branch migration complex subunit RuvA from Parasynechococcus marenigrum (strain WH8102).